A 372-amino-acid polypeptide reads, in one-letter code: Lectin/endochitinase 1 (372 aa).

The N-terminal stretch at Met1–Ala23 is a signal peptide. Substrate is bound at residue Gln24. Gln24 is subject to Pyrrolidone carboxylic acid. 2 Chitin-binding type-1 domains span residues Gln24–Ser64 and Asp69–Ser111. 4 cysteine pairs are disulfide-bonded: Cys26–Cys41, Cys35–Cys47, Cys40–Cys54, and Cys58–Cys62. Position 42 to 53 (Ser42 to Tyr53) interacts with substrate. Position 70 (His70) interacts with Zn(2+). 4 disulfides stabilise this stretch: Cys72–Cys87, Cys81–Cys93, Cys86–Cys100, and Cys105–Cys109. His90 serves as a coordination point for Zn(2+). Positions Val113–Ser128 are spacer. Asn123 carries N-linked (GlcNAc...) asparagine glycosylation. The segment at Ile129–Ala372 is chitinase.

In terms of assembly, monomer and homodimer. Zinc favors dimerization. Active in the monomeric form but probably inactive in the dimeric form. The interaction with glycans on the mammalian TCR and MHC molecules of the T-cell and antigen-presenting cell, respectively, is inhibited by oligomers of GlcNAc. In terms of processing, proteolytically processed to yield a very small protein (8.5 kDa, 86 AA) containing only the two chitin-binding domains. As to expression, rhizomes and inflorescence with immature seeds.

It carries out the reaction Random endo-hydrolysis of N-acetyl-beta-D-glucosaminide (1-&gt;4)-beta-linkages in chitin and chitodextrins.. Functionally, functions both as a chitinase and as a N-acetyl-D-glucosamine binding lectin. Inhibits the growth of several phytopathogenic chitin-containing fungi. Also possesses insecticidal activity and superantigenic properties. In Urtica dioica (Great nettle), this protein is Lectin/endochitinase 1 (UDA1).